Here is a 372-residue protein sequence, read N- to C-terminus: uncharacterized protein (372 aa).

Positions 49–72 (FSHKGGGKGGGSGAGSNDGGCSGE) are disordered. Residues 55–70 (GKGGGSGAGSNDGGCS) show a composition bias toward gly residues.

This is an uncharacterized protein from Halorubrum lacusprofundi (strain ATCC 49239 / DSM 5036 / JCM 8891 / ACAM 34).